The following is a 242-amino-acid chain: E3 ubiquitin-protein ligase AIRP2 (242 aa).

An RING-type zinc finger spans residues 146-184 (CGICLEIRNKVVLPTCNHSMCINCYRNWRARSQSCPFCR).

Interacts with ATP1/SDIRIP1. Expressed in germinating seeds, flower organs and siliques.

It localises to the cytoplasm. The protein resides in the cytosol. It carries out the reaction S-ubiquitinyl-[E2 ubiquitin-conjugating enzyme]-L-cysteine + [acceptor protein]-L-lysine = [E2 ubiquitin-conjugating enzyme]-L-cysteine + N(6)-ubiquitinyl-[acceptor protein]-L-lysine.. Functionally, possesses E3 ubiquitin-protein ligase activity in vitro when associated with the E2 enzyme UBC8 in vitro. Plays combinatory roles with AIRP1 in the positive regulation of the abscisic acid-mediated drought stress response. Plays a positive role in abscisic acid- and high salinity-regulated seed germination through the ubiquitin-proteasome-dependent down-regulation of ATP1/SDIRIP1. In Arabidopsis thaliana (Mouse-ear cress), this protein is E3 ubiquitin-protein ligase AIRP2.